We begin with the raw amino-acid sequence, 115 residues long: Large ribosomal subunit protein bL19 (115 aa).

This sequence belongs to the bacterial ribosomal protein bL19 family.

Functionally, this protein is located at the 30S-50S ribosomal subunit interface and may play a role in the structure and function of the aminoacyl-tRNA binding site. The polypeptide is Large ribosomal subunit protein bL19 (Streptococcus equi subsp. equi (strain 4047)).